The sequence spans 878 residues: Alanine--tRNA ligase (878 aa).

Positions 566, 570, 668, and 672 each coordinate Zn(2+).

It belongs to the class-II aminoacyl-tRNA synthetase family. Zn(2+) is required as a cofactor.

It localises to the cytoplasm. The catalysed reaction is tRNA(Ala) + L-alanine + ATP = L-alanyl-tRNA(Ala) + AMP + diphosphate. Catalyzes the attachment of alanine to tRNA(Ala) in a two-step reaction: alanine is first activated by ATP to form Ala-AMP and then transferred to the acceptor end of tRNA(Ala). Also edits incorrectly charged Ser-tRNA(Ala) and Gly-tRNA(Ala) via its editing domain. This is Alanine--tRNA ligase from Geobacillus thermodenitrificans (strain NG80-2).